The following is a 667-amino-acid chain: MSQRVSDQVMADVIAETRSNSSSHRHGGGGGGDDTTSLPYMHKVGTPPKQTLFQEIKHSFNETFFPDKPFGKFKDQSGFRKLELGLQYIFPILEWGRHYDLKKFRGDFIAGLTIASLCIPQDLAYAKLANLDPWYGLYSSFVAPLVYAFMGTSRDIAIGPVAVVSLLLGTLLSNEISNTKSHDYLRLAFTATFFAGVTQMLLGVCRLGFLIDFLSHAAIVGFMAGAAITIGLQQLKGLLGISNNNFTKKTDIISVMRSVWTHVHHGWNWETILIGLSFLIFLLITKYIAKKNKKLFWVSAISPMISVIVSTFFVYITRADKRGVSIVKHIKSGVNPSSANEIFFHGKYLGAGVRVGVVAGLVALTEAIAIGRTFAAMKDYALDGNKEMVAMGTMNIVGSLSSCYVTTGSFSRSAVNYMAGCKTAVSNIVMSIVVLLTLLVITPLFKYTPNAVLASIIIAAVVNLVNIEAMVLLWKIDKFDFVACMGAFFGVIFKSVEIGLLIAVAISFAKILLQVTRPRTAVLGKLPGTSVYRNIQQYPKAAQIPGMLIIRVDSAIYFSNSNYIKERILRWLIDEGAQRTESELPEIQHLITEMSPVPDIDTSGIHAFEELYKTLQKREVQLILANPGPVVIEKLHASKLTELIGEDKIFLTVADAVATYGPKTAAF.

Positions 16 to 38 are disordered; that stretch reads ETRSNSSSHRHGGGGGGDDTTSL. The next 11 helical transmembrane spans lie at 106–126, 131–151, 156–176, 185–205, 208–228, 269–289, 296–316, 350–370, 425–445, 452–472, and 486–506; these read GDFIAGLTIASLCIPQDLAYA, LDPWYGLYSSFVAPLVYAFMG, IAIGPVAVVSLLLGTLLSNEI, LRLAFTATFFAGVTQMLLGVC, GFLIDFLSHAAIVGFMAGAAI, WETILIGLSFLIFLLITKYIA, FWVSAISPMISVIVSTFFVYI, GAGVRVGVVAGLVALTEAIAI, VSNIVMSIVVLLTLLVITPLF, VLASIIIAAVVNLVNIEAMVL, and GAFFGVIFKSVEIGLLIAVAI. An STAS domain is found at 537 to 660; sequence QYPKAAQIPG…LTVADAVATY (124 aa).

This sequence belongs to the SLC26A/SulP transporter (TC 2.A.53) family.

The protein resides in the membrane. Its function is as follows. High-affinity H(+)/sulfate cotransporter that mediates the uptake of sulfate by plant roots from low concentrations of sulfate in the soil solution. In Stylosanthes hamata (Caribbean stylo), this protein is High affinity sulfate transporter 1 (ST1).